The chain runs to 373 residues: MDRVVFFFLIAATLLAGSLGSTVISGEVTDGFVNPIRQVVPEENDEQLLNAEHHFTLFKSKYEKTYATQVEHDHRFRVFKANLRRARRNQLLDPSAVHGVTQFSDLTPKEFRRKFLGLKRRGFRLPTDTQTAPILPTSDLPTEFDWREQGAVTPVKNQGMCGSCWSFSAIGALEGAHFLATKELVSLSEQQLVDCDHECDPAQANSCDSGCSGGLMNNAFEYALKAGGLMKEEDYPYTGRDHTACKFDKSKIVASVSNFSVVSSDEDQIAANLVQHGPLAIAINAMWMQTYIGGVSCPYVCSKSQDHGVLLVGFGSSGYAPIRLKEKPYWIIKNSWGAMWGEHGYYKICRGPHNMCGMDTMVSTVAAVHTSPK.

A signal peptide spans 1–20; sequence MDRVVFFFLIAATLLAGSLG. A propeptide spans 21–139 (activation peptide); sequence STVISGEVTD…QTAPILPTSD (119 aa). 2 disulfide bridges follow: Cys-161–Cys-211 and Cys-195–Cys-245. The active site involves Cys-164. Asn-258 carries N-linked (GlcNAc...) asparagine glycosylation. Cysteines 301 and 356 form a disulfide. Active-site residues include His-307 and Asn-334.

Belongs to the peptidase C1 family.

It is found in the lytic vacuole. Functionally, probable thiol protease. This is Probable cysteine protease RD19C from Arabidopsis thaliana (Mouse-ear cress).